Here is a 357-residue protein sequence, read N- to C-terminus: UDP-N-acetylglucosamine--N-acetylmuramyl-(pentapeptide) pyrophosphoryl-undecaprenol N-acetylglucosamine transferase (357 aa).

UDP-N-acetyl-alpha-D-glucosamine contacts are provided by residues 15-17, Asn124, Arg165, Ser194, and Gln288; that span reads TGG.

Belongs to the glycosyltransferase 28 family. MurG subfamily.

The protein localises to the cell inner membrane. It carries out the reaction di-trans,octa-cis-undecaprenyl diphospho-N-acetyl-alpha-D-muramoyl-L-alanyl-D-glutamyl-meso-2,6-diaminopimeloyl-D-alanyl-D-alanine + UDP-N-acetyl-alpha-D-glucosamine = di-trans,octa-cis-undecaprenyl diphospho-[N-acetyl-alpha-D-glucosaminyl-(1-&gt;4)]-N-acetyl-alpha-D-muramoyl-L-alanyl-D-glutamyl-meso-2,6-diaminopimeloyl-D-alanyl-D-alanine + UDP + H(+). Its pathway is cell wall biogenesis; peptidoglycan biosynthesis. Functionally, cell wall formation. Catalyzes the transfer of a GlcNAc subunit on undecaprenyl-pyrophosphoryl-MurNAc-pentapeptide (lipid intermediate I) to form undecaprenyl-pyrophosphoryl-MurNAc-(pentapeptide)GlcNAc (lipid intermediate II). The chain is UDP-N-acetylglucosamine--N-acetylmuramyl-(pentapeptide) pyrophosphoryl-undecaprenol N-acetylglucosamine transferase from Nostoc sp. (strain PCC 7120 / SAG 25.82 / UTEX 2576).